We begin with the raw amino-acid sequence, 588 residues long: Transcriptional regulatory protein ASH1 (588 aa).

Phosphoserine is present on Ser-56. Disordered stretches follow at residues 85–109 (SNTAPASPHHMDYNPISSLTPGNSP), 377–398 (SNNSKSNVRKPSKNKISKQASN), and 417–495 (SSVS…TRHT). The segment covering 99–109 (PISSLTPGNSP) has biased composition (polar residues). Positions 383–392 (NVRKPSKNKI) are enriched in basic residues. Residues 417–433 (SSVSASSSPSPSTPTKS) show a composition bias toward low complexity. Phosphoserine is present on Ser-465. The segment covering 470–493 (PRRSSNSSITKKGSRRSSGSSPTR) has biased composition (low complexity). The GATA-type; atypical zinc finger occupies 499 to 526 (CVSCHSSDSPCWRPSWSPRKQDQLCNSC).

Component of the RPD3C(L) complex composed of at least ASH1, CTI6, DEP1, PHO23, RPD3, RXT2, RXT3, SAP30, SDS3, SIN3, UME1 and UME6.

The protein localises to the nucleus. Its function is as follows. Component of the RPD3C(L) histone deacetylase complex (HDAC). Responsible for the deacetylation of lysine residues on the N-terminal part of the core histones (H2A, H2B, H3 and H4). Histone deacetylation gives a tag for epigenetic repression and plays an important role in transcriptional regulation, cell cycle progression and developmental events. ASH1 is necessary to repress HO in daughter cells to block mating-type switching through its binding to HO promoter 5'-YTGAT-3' sites. Also involved in pseudohyphal growth. The protein is Transcriptional regulatory protein ASH1 (ASH1) of Saccharomyces cerevisiae (strain ATCC 204508 / S288c) (Baker's yeast).